Reading from the N-terminus, the 348-residue chain is Succinoglycan biosynthesis protein ExoO (348 aa).

The tract at residues 322-348 is disordered; it reads HSAPRAAPVTAAAERSPLGNDPRISKG. Low complexity predominate over residues 324–334; it reads APRAAPVTAAA.

The protein belongs to the glycosyltransferase 2 family.

The protein localises to the cytoplasm. The protein operates within glycan metabolism; exopolysaccharide biosynthesis. Its function is as follows. Glycosyltransferase required for the synthesis of succinoglycan (EPS I). Needed for the addition of the fifth sugar (glucose), catalyzes the formation of a beta-1,6 linkage between the fourth and fifth sugar. The sequence is that of Succinoglycan biosynthesis protein ExoO (exoO) from Rhizobium meliloti (strain 1021) (Ensifer meliloti).